Consider the following 181-residue polypeptide: Thioredoxin-like protein CITRX1, chloroplastic (181 aa).

Residues 1-20 (MQAATLSFHPSAPPPQTSAC) form a disordered region. Residues 1 to 70 (MQAATLSFHP…PAVATGKYVR (70 aa)) constitute a chloroplast transit peptide. Residues 71-181 (EDYLVKKVSA…MMRDIINNDL (111 aa)) enclose the Thioredoxin domain. Active-site nucleophile residues include Cys-104 and Cys-107. Cys-104 and Cys-107 are oxidised to a cystine.

This sequence belongs to the thioredoxin family. Plant CITRX-type subfamily.

It localises to the plastid. The protein resides in the chloroplast. Probable thiol-disulfide oxidoreductase that may play a role in proper chloroplast development. In Nicotiana benthamiana, this protein is Thioredoxin-like protein CITRX1, chloroplastic.